A 344-amino-acid chain; its full sequence is Glycerol-3-phosphate dehydrogenase [NAD(P)+] (344 aa).

NADPH contacts are provided by W18, H38, and K115. Sn-glycerol 3-phosphate contacts are provided by K115, G144, and T146. A148 provides a ligand contact to NADPH. K199, D252, S262, R263, and N264 together coordinate sn-glycerol 3-phosphate. K199 (proton acceptor) is an active-site residue. R263 is an NADPH binding site. 2 residues coordinate NADPH: V288 and E290.

It belongs to the NAD-dependent glycerol-3-phosphate dehydrogenase family.

The protein localises to the cytoplasm. The enzyme catalyses sn-glycerol 3-phosphate + NAD(+) = dihydroxyacetone phosphate + NADH + H(+). It catalyses the reaction sn-glycerol 3-phosphate + NADP(+) = dihydroxyacetone phosphate + NADPH + H(+). It participates in membrane lipid metabolism; glycerophospholipid metabolism. In terms of biological role, catalyzes the reduction of the glycolytic intermediate dihydroxyacetone phosphate (DHAP) to sn-glycerol 3-phosphate (G3P), the key precursor for phospholipid synthesis. The chain is Glycerol-3-phosphate dehydrogenase [NAD(P)+] from Hydrogenovibrio crunogenus (strain DSM 25203 / XCL-2) (Thiomicrospira crunogena).